The chain runs to 533 residues: Flavin-dependent halogenase armH4 (533 aa).

3 residues coordinate FAD: G16, A19, and E49. Residues S337 and G338 each contribute to the chloride site. Residue V339 coordinates FAD.

It belongs to the flavin-dependent halogenase family.

It catalyses the reaction melleolide F + FADH2 + chloride + O2 = 6'-chloromelleolide F + FAD + 2 H2O + H(+). It carries out the reaction melleolide F + bromide + FADH2 + O2 = 6'-bromomelleolide F + FAD + 2 H2O. Functionally, flavin-dependent halogenase involved in the biosynthesis of melleolides, a range of antifungal and phytotoxic polyketide derivatives composed of an orsellinic acid (OA) moiety esterified to various sesquiterpene alcohols. The halogenase catalyzes the transfer of a single chlorine atom to the melleolide backbone, resulting in a 6'-chloromelleolide product. The enzyme acts on free substrate and does not depend on carrier-protein-dependent acceptor molecules. Can also catalyze the transfer of a single bromine atom to the melleolide backbone in vitro. This is Flavin-dependent halogenase armH4 from Armillaria mellea (Honey mushroom).